We begin with the raw amino-acid sequence, 346 residues long: Glycosyltransferase 1 domain-containing protein 1 (346 aa).

Residues 1-16 (MRLLFLAVLRPHTGNA) form the signal peptide.

It belongs to the glycosyltransferase group 1 family. Glycosyltransferase 4 subfamily.

It localises to the secreted. This chain is Glycosyltransferase 1 domain-containing protein 1 (GLT1D1), found in Homo sapiens (Human).